The sequence spans 383 residues: PqqA peptide cyclase (383 aa).

Residues 11 to 226 enclose the Radical SAM core domain; that stretch reads PGPPLWLLAE…TNQWREKLAA (216 aa). The [4Fe-4S] cluster site is built by cysteine 25, cysteine 29, and cysteine 32.

This sequence belongs to the radical SAM superfamily. PqqE family. In terms of assembly, interacts with PqqD. The interaction is necessary for activity of PqqE. [4Fe-4S] cluster serves as cofactor.

The enzyme catalyses [PQQ precursor protein] + S-adenosyl-L-methionine = E-Y cross-linked-[PQQ precursor protein] + 5'-deoxyadenosine + L-methionine + H(+). The protein operates within cofactor biosynthesis; pyrroloquinoline quinone biosynthesis. Functionally, catalyzes the cross-linking of a glutamate residue and a tyrosine residue in the PqqA protein as part of the biosynthesis of pyrroloquinoline quinone (PQQ). This Azotobacter vinelandii (strain DJ / ATCC BAA-1303) protein is PqqA peptide cyclase.